The chain runs to 217 residues: Ribonuclease HII (217 aa).

The region spanning 27–216 (RTIAGIDEAG…VREHLGESRC (190 aa)) is the RNase H type-2 domain. A divalent metal cation-binding residues include Asp33, Glu34, and Asp125.

This sequence belongs to the RNase HII family. Requires Mn(2+) as cofactor. Mg(2+) is required as a cofactor.

Its subcellular location is the cytoplasm. It catalyses the reaction Endonucleolytic cleavage to 5'-phosphomonoester.. In terms of biological role, endonuclease that specifically degrades the RNA of RNA-DNA hybrids. The chain is Ribonuclease HII from Geobacter sulfurreducens (strain ATCC 51573 / DSM 12127 / PCA).